Reading from the N-terminus, the 476-residue chain is Beta-amyrin 28-monooxygenase (476 aa).

A helical membrane pass occupies residues 2–22 (ELLYVCLVCVFVFLVSLLLLY). Cys421 serves as a coordination point for heme.

This sequence belongs to the cytochrome P450 family. Heme is required as a cofactor. Specifically expressed in roots.

The protein resides in the membrane. The catalysed reaction is beta-amyrin + 3 reduced [NADPH--hemoprotein reductase] + 3 O2 = oleanolate + 3 oxidized [NADPH--hemoprotein reductase] + 4 H2O + 4 H(+). Catalyzes the carboxylation of beta-amyrin at the C-28 position to form oleanolate. Catalyzes the carboxylation of alpha-amyrin at the C-28 position to form ursolate. This Solanum lycopersicum (Tomato) protein is Beta-amyrin 28-monooxygenase (CYP716A44).